Here is a 640-residue protein sequence, read N- to C-terminus: Scarecrow-like protein 27 (640 aa).

2 stretches are compositionally biased toward low complexity: residues Ser-68–Ser-79 and Thr-86–Asn-98. The tract at residues Ser-68–Asn-98 is disordered. Residues Gly-259–Lys-639 form the GRAS domain. Positions Ser-266 to Asn-331 are leucine repeat I (LRI). The interval Tyr-350–Val-422 is VHIID. A VHIID motif is present at residues Ile-383–Asp-387. Residues Phe-438–Trp-470 are leucine repeat II (LRII). The PFYRE stretch occupies residues Glu-480–Lys-565. The SAW stretch occupies residues Met-568–Lys-639.

This sequence belongs to the GRAS family. Expressed in seedlings, roots, cotyledons, leaves and flowers.

It is found in the nucleus. In terms of biological role, probable transcription factor involved in plant development. This chain is Scarecrow-like protein 27 (SCL27), found in Arabidopsis thaliana (Mouse-ear cress).